The following is a 471-amino-acid chain: Serine/threonine-protein kinase AtPK2/AtPK19 (471 aa).

A disordered region spans residues 1–21 (MVSSQCSVANKNQTGKPFQKH). One can recognise a Protein kinase domain in the interval 140 to 395 (FEVLKVVGQG…AEEIKKHKWF (256 aa)). Residues 146 to 154 (VGQGAFGKV) and lysine 169 each bind ATP. Aspartate 263 functions as the Proton acceptor in the catalytic mechanism. Residues 281-307 (DFGLAKEFEENTRSNSMCGTTEYMAPE) form an activation loop region. At serine 296 the chain carries Phosphoserine; by PDPK1. One can recognise an AGC-kinase C-terminal domain in the interval 396-466 (KAINWKKLEA…VRPPHSFLHR (71 aa)). A Phosphothreonine; by TOR modification is found at threonine 455.

This sequence belongs to the protein kinase superfamily. AGC Ser/Thr protein kinase family. S6 kinase subfamily. As to quaternary structure, interacts with TAP46. Binds to MRF1. Undergoes serine-specific autophosphorylation. Phosphorylated at Thr-455 by TOR.

It carries out the reaction L-seryl-[protein] + ATP = O-phospho-L-seryl-[protein] + ADP + H(+). It catalyses the reaction L-threonyl-[protein] + ATP = O-phospho-L-threonyl-[protein] + ADP + H(+). Its activity is regulated as follows. Activated by PDK1. Its function is as follows. Downstream effector of TOR signaling pathway. May be involved in adaptation of plant to cold or high-salt conditions. Mediates the phosphorylation of MRFs (e.g. MRF1). The sequence is that of Serine/threonine-protein kinase AtPK2/AtPK19 (ATPK2) from Arabidopsis thaliana (Mouse-ear cress).